The primary structure comprises 176 residues: Nucleoside triphosphate/diphosphate phosphatase (176 aa).

Residue Arg23 is the Proton donor of the active site. Mg(2+) is bound by residues Asn87, Asp103, Asp105, Asp107, Asp120, and Glu123.

Belongs to the Ntdp family. Mg(2+) serves as cofactor.

The enzyme catalyses a ribonucleoside 5'-triphosphate + H2O = a ribonucleoside 5'-diphosphate + phosphate + H(+). It catalyses the reaction a ribonucleoside 5'-diphosphate + H2O = a ribonucleoside 5'-phosphate + phosphate + H(+). In terms of biological role, has nucleoside phosphatase activity towards nucleoside triphosphates and nucleoside diphosphates. This Bacillus licheniformis (strain ATCC 14580 / DSM 13 / JCM 2505 / CCUG 7422 / NBRC 12200 / NCIMB 9375 / NCTC 10341 / NRRL NRS-1264 / Gibson 46) protein is Nucleoside triphosphate/diphosphate phosphatase.